The following is a 55-amino-acid chain: Large ribosomal subunit protein bL33 (55 aa).

Belongs to the bacterial ribosomal protein bL33 family.

The polypeptide is Large ribosomal subunit protein bL33 (Dehalococcoides mccartyi (strain ATCC BAA-2100 / JCM 16839 / KCTC 5957 / BAV1)).